The chain runs to 107 residues: Polyketide synthase CurG (107 aa).

It functions in the pathway antibiotic biosynthesis; curamycin biosynthesis. In Streptomyces cyaneus (Streptomyces curacoi), this protein is Polyketide synthase CurG (curG).